The chain runs to 400 residues: Nicotinate phosphoribosyltransferase (400 aa).

Phosphohistidine; by autocatalysis is present on histidine 220.

It belongs to the NAPRTase family. Transiently phosphorylated on a His residue during the reaction cycle. Phosphorylation strongly increases the affinity for substrates and increases the rate of nicotinate D-ribonucleotide production. Dephosphorylation regenerates the low-affinity form of the enzyme, leading to product release.

It carries out the reaction nicotinate + 5-phospho-alpha-D-ribose 1-diphosphate + ATP + H2O = nicotinate beta-D-ribonucleotide + ADP + phosphate + diphosphate. Its pathway is cofactor biosynthesis; NAD(+) biosynthesis; nicotinate D-ribonucleotide from nicotinate: step 1/1. Its function is as follows. Catalyzes the synthesis of beta-nicotinate D-ribonucleotide from nicotinate and 5-phospho-D-ribose 1-phosphate at the expense of ATP. The protein is Nicotinate phosphoribosyltransferase of Escherichia coli O45:K1 (strain S88 / ExPEC).